The following is a 259-amino-acid chain: UPF0246 protein ABBFA_001173 (259 aa).

It belongs to the UPF0246 family.

This chain is UPF0246 protein ABBFA_001173, found in Acinetobacter baumannii (strain AB307-0294).